A 450-amino-acid polypeptide reads, in one-letter code: Protein tweety homolog 1 (450 aa).

Residues 1 to 43 (MGAPPGYRPSAWVHLLHQLPRADFQLRPVPSAFAPQEREYQQA) are Extracellular-facing. The chain crosses the membrane as a helical span at residues 44–64 (LLLVAALAGLGLGLSLIFIAV). Residues 65 to 88 (YLIRFCCCRPPEPPGAKSPPPGGG) are Cytoplasmic-facing. The helical transmembrane segment at 89–109 (CVTWNCIAALLVGCAGIGVGF) threads the bilayer. Topologically, residues 110–214 (YGNSETSDGV…DVSFVEEYRW (105 aa)) are extracellular. N130 is a glycosylation site (N-linked (GlcNAc...) asparagine). Residues 215 to 235 (LAYVLLLLLELLVCLFTLLGL) form a helical membrane-spanning segment. The Cytoplasmic segment spans residues 236-240 (ARQSK). The chain crosses the membrane as a helical span at residues 241 to 261 (WLVIVMTVMSLLVLVLSWGSM). At 262–390 (GLEAATAVGL…LRGLCEDTLE (129 aa)) the chain is on the extracellular side. 2 disulfide bridges follow: C275-C385 and C303-C370. N-linked (GlcNAc...) asparagine glycosylation is found at N284 and N355. The helical transmembrane segment at 391–411 (GLLFLLLFSLLSAGALATVLC) threads the bilayer. Topologically, residues 412–450 (SLPRAWALFPPSDDYEDTDDDDPFNPQESKRFVQWQSSI) are cytoplasmic. The disordered stretch occupies residues 427–450 (EDTDDDDPFNPQESKRFVQWQSSI). S440 bears the Phosphoserine mark.

Belongs to the tweety family. In terms of assembly, homotetramer; disulfide-linked. Homodimer. In terms of processing, N-glycosylated. Contains high-mannose, hybrid and complex oligosaccharides.

It localises to the cell membrane. The enzyme catalyses chloride(in) = chloride(out). The catalysed reaction is L-glutamate(out) = L-glutamate(in). Functionally, calcium-independent, swelling-dependent volume-regulated anion channel (VRAC-swell) which plays a pivotal role in the process of regulatory volume decrease (RVD) in the brain through the efflux of anions like chloride and organic osmolytes like glutamate. The sequence is that of Protein tweety homolog 1 (TTYH1) from Bos taurus (Bovine).